The chain runs to 379 residues: Cathepsin B-like protease 1 (379 aa).

A signal peptide spans 1–30; that stretch reads MADSCCIRLHLLASVFLLLFSSFNLQGIAA. Positions 31–102 are cleaved as a propeptide — activation peptide; it reads ENLSKQKLTS…PIVRHDLSLK (72 aa). N-linked (GlcNAc...) asparagine glycosylation is found at N32 and N69. 6 cysteine pairs are disulfide-bonded: C116–C165, C148–C191, C182–C236, C183–C187, C213–C240, and C222–C227. C151 is an active-site residue. N171 is a glycosylation site (N-linked (GlcNAc...) asparagine). Active-site residues include H306 and N327. The N-linked (GlcNAc...) asparagine glycan is linked to N330. Positions 363-379 are cleaved as a propeptide — removed in mature form; it reads NVFKGITTSDDLLVSSV.

The protein belongs to the peptidase C1 family.

Functionally, thiol protease that plays a central role in plant programmed cell death (PCD). In addition to its role in protein degradation, may cleave and/or degrade a number of target proteins, activating signaling towards PCD. Contributes to the increase of caspase-3-like activity after UV-C-induced PCD and is required for abiotic stress-induced PCD. Functions redundantly with CATHB2 and CATHB3 in basal defense and distinct forms of plant programmed cell death (PCD). Participates in the establishment of basal resistance against the bacterial pathogen Pseudomonase syringae pv. tomato DC3000. Required for full levels of PCD during resistance (R) gene-mediated hypersensitive response (HR). Involved in the regulation of senescence, a developmental form of PCD in plants. This Arabidopsis thaliana (Mouse-ear cress) protein is Cathepsin B-like protease 1.